Here is a 376-residue protein sequence, read N- to C-terminus: D-alanine--D-alanine ligase (376 aa).

An ATP-grasp domain is found at 153 to 366; it reads KLLLAGQGLP…YPELVHRLIQ (214 aa). 185 to 240 is a binding site for ATP; the sequence is VEALGYPVFVKPARAGSSIGITRVTSREGLAAAVAEAVSHDPKVVVEAALVGREIE. Mg(2+) is bound by residues aspartate 317, glutamate 333, and asparagine 335.

The protein belongs to the D-alanine--D-alanine ligase family. Requires Mg(2+) as cofactor. The cofactor is Mn(2+).

It is found in the cytoplasm. It catalyses the reaction 2 D-alanine + ATP = D-alanyl-D-alanine + ADP + phosphate + H(+). It functions in the pathway cell wall biogenesis; peptidoglycan biosynthesis. Cell wall formation. The protein is D-alanine--D-alanine ligase of Kineococcus radiotolerans (strain ATCC BAA-149 / DSM 14245 / SRS30216).